The sequence spans 158 residues: 6,7-dimethyl-8-ribityllumazine synthase (158 aa).

Residues W27, 58–60 (SFE), and 81–83 (VII) each bind 5-amino-6-(D-ribitylamino)uracil. 86-87 (GT) provides a ligand contact to (2S)-2-hydroxy-3-oxobutyl phosphate. H89 serves as the catalytic Proton donor. F114 contacts 5-amino-6-(D-ribitylamino)uracil. R128 contacts (2S)-2-hydroxy-3-oxobutyl phosphate.

Belongs to the DMRL synthase family.

It catalyses the reaction (2S)-2-hydroxy-3-oxobutyl phosphate + 5-amino-6-(D-ribitylamino)uracil = 6,7-dimethyl-8-(1-D-ribityl)lumazine + phosphate + 2 H2O + H(+). The protein operates within cofactor biosynthesis; riboflavin biosynthesis; riboflavin from 2-hydroxy-3-oxobutyl phosphate and 5-amino-6-(D-ribitylamino)uracil: step 1/2. Catalyzes the formation of 6,7-dimethyl-8-ribityllumazine by condensation of 5-amino-6-(D-ribitylamino)uracil with 3,4-dihydroxy-2-butanone 4-phosphate. This is the penultimate step in the biosynthesis of riboflavin. This Leifsonia xyli subsp. xyli (strain CTCB07) protein is 6,7-dimethyl-8-ribityllumazine synthase.